A 107-amino-acid polypeptide reads, in one-letter code: Small ribosomal subunit protein uS10 (107 aa).

The protein belongs to the universal ribosomal protein uS10 family. Part of the 30S ribosomal subunit.

Functionally, involved in the binding of tRNA to the ribosomes. The sequence is that of Small ribosomal subunit protein uS10 from Deinococcus deserti (strain DSM 17065 / CIP 109153 / LMG 22923 / VCD115).